A 102-amino-acid chain; its full sequence is RNA-binding protein Hfq (102 aa).

Residues 9 to 68 form the Sm domain; the sequence is DPFLNALRRERVPVSIYLVNGIKLQGQIESFDQFVILLKNTVSQMVYKHAISTVVPSRPV. The tract at residues 63-102 is disordered; sequence VPSRPVSHHSNNAGGGASNNYHHGSNVQGSTAQQDSEETE. Low complexity predominate over residues 70 to 88; that stretch reads HHSNNAGGGASNNYHHGSN.

This sequence belongs to the Hfq family. In terms of assembly, homohexamer.

Its function is as follows. RNA chaperone that binds small regulatory RNA (sRNAs) and mRNAs to facilitate mRNA translational regulation in response to envelope stress, environmental stress and changes in metabolite concentrations. Also binds with high specificity to tRNAs. The protein is RNA-binding protein Hfq of Salmonella choleraesuis (strain SC-B67).